We begin with the raw amino-acid sequence, 115 residues long: NAD(P)H-quinone oxidoreductase subunit M (115 aa).

It belongs to the complex I NdhM subunit family. As to quaternary structure, NDH-1 can be composed of about 15 different subunits; different subcomplexes with different compositions have been identified which probably have different functions.

The protein resides in the cellular thylakoid membrane. The catalysed reaction is a plastoquinone + NADH + (n+1) H(+)(in) = a plastoquinol + NAD(+) + n H(+)(out). It catalyses the reaction a plastoquinone + NADPH + (n+1) H(+)(in) = a plastoquinol + NADP(+) + n H(+)(out). Its function is as follows. NDH-1 shuttles electrons from an unknown electron donor, via FMN and iron-sulfur (Fe-S) centers, to quinones in the respiratory and/or the photosynthetic chain. The immediate electron acceptor for the enzyme in this species is believed to be plastoquinone. Couples the redox reaction to proton translocation, and thus conserves the redox energy in a proton gradient. Cyanobacterial NDH-1 also plays a role in inorganic carbon-concentration. The polypeptide is NAD(P)H-quinone oxidoreductase subunit M (Prochlorococcus marinus (strain NATL2A)).